The chain runs to 332 residues: UDP-3-O-acylglucosamine N-acyltransferase (332 aa).

Histidine 235 serves as the catalytic Proton acceptor.

The protein belongs to the transferase hexapeptide repeat family. LpxD subfamily. In terms of assembly, homotrimer.

It carries out the reaction a UDP-3-O-[(3R)-3-hydroxyacyl]-alpha-D-glucosamine + a (3R)-hydroxyacyl-[ACP] = a UDP-2-N,3-O-bis[(3R)-3-hydroxyacyl]-alpha-D-glucosamine + holo-[ACP] + H(+). The protein operates within bacterial outer membrane biogenesis; LPS lipid A biosynthesis. In terms of biological role, catalyzes the N-acylation of UDP-3-O-acylglucosamine using 3-hydroxyacyl-ACP as the acyl donor. Is involved in the biosynthesis of lipid A, a phosphorylated glycolipid that anchors the lipopolysaccharide to the outer membrane of the cell. This Fusobacterium nucleatum subsp. nucleatum (strain ATCC 25586 / DSM 15643 / BCRC 10681 / CIP 101130 / JCM 8532 / KCTC 2640 / LMG 13131 / VPI 4355) protein is UDP-3-O-acylglucosamine N-acyltransferase.